Reading from the N-terminus, the 1017-residue chain is Sodium/potassium-transporting ATPase subunit alpha-2 (1017 aa).

Positions methionine 1–lysine 31 are disordered. The Cytoplasmic portion of the chain corresponds to methionine 1–proline 82. The interval proline 77 to proline 79 is interaction with phosphoinositide-3 kinase. Residues glutamate 83–alanine 103 traverse the membrane as a helical segment. Residues isoleucine 104 to tyrosine 126 lie on the Extracellular side of the membrane. Residues leucine 127 to alanine 147 traverse the membrane as a helical segment. At lysine 148 to isoleucine 283 the chain is on the cytoplasmic side. A disordered region spans residues lysine 207 to histidine 228. The span at aspartate 209–proline 224 shows a compositional bias: polar residues. The helical transmembrane segment at glutamate 284–isoleucine 303 threads the bilayer. Over leucine 304–alanine 315 the chain is Extracellular. Residues valine 316–alanine 333 form a helical membrane-spanning segment. At threonine 334–leucine 766 the chain is on the cytoplasmic side. Aspartate 371 functions as the 4-aspartylphosphate intermediate in the catalytic mechanism. Lysine 502 serves as a coordination point for ATP. Residues aspartate 711 and aspartate 715 each coordinate Mg(2+). Residues lysine 767–leucine 786 form a helical membrane-spanning segment. The Extracellular portion of the chain corresponds to phenylalanine 787–leucine 796. A helical membrane pass occupies residues glycine 797 to alanine 817. Over tyrosine 818–lysine 837 the chain is Cytoplasmic. The chain crosses the membrane as a helical span at residues leucine 838–phenylalanine 860. Topologically, residues phenylalanine 861–cysteine 912 are extracellular. A helical transmembrane segment spans residues histidine 913–lysine 932. Residues threonine 933–asparagine 945 lie on the Cytoplasmic side of the membrane. The residue at position 937 (serine 937) is a Phosphoserine; by PKA. The helical transmembrane segment at lysine 946–tyrosine 964 threads the bilayer. At cysteine 965–valine 979 the chain is on the extracellular side. Residues threonine 980 to lysine 1000 traverse the membrane as a helical segment. Over leucine 1001–tyrosine 1017 the chain is Cytoplasmic.

The protein belongs to the cation transport ATPase (P-type) (TC 3.A.3) family. Type IIC subfamily. As to quaternary structure, the sodium/potassium-transporting ATPase is composed of a catalytic alpha subunit, an auxiliary non-catalytic beta subunit and an additional regulatory subunit.

It is found in the membrane. It localises to the cell membrane. It catalyses the reaction K(+)(out) + Na(+)(in) + ATP + H2O = K(+)(in) + Na(+)(out) + ADP + phosphate + H(+). In terms of biological role, this is the catalytic component of the active enzyme, which catalyzes the hydrolysis of ATP coupled with the exchange of sodium and potassium ions across the plasma membrane. This action creates the electrochemical gradient of sodium and potassium ions, providing the energy for active transport of various nutrients. This chain is Sodium/potassium-transporting ATPase subunit alpha-2 (ATP1A2), found in Gallus gallus (Chicken).